The chain runs to 1015 residues: Fibronectin-binding protein A (1015 aa).

A signal peptide spans 1-36; that stretch reads MKNNLRYGIRKHKLGAASVFLGTMIVVGMGQDKEAA. A YSIRK-G/S signaling motif motif is present at residues 7–18; the sequence is YGIRKHKLGAAS. A ligand-binding A region region spans residues 37 to 512; sequence ASEQKTTTVE…SNKADGNGKN (476 aa). The span at 75 to 92 shows a compositional bias: polar residues; it reads SYSATATEQPSNATQVTT. Residues 75 to 199 form a disordered region; it reads SYSATATEQP…KVETGTDVTS (125 aa). The segment covering 112–126 has biased composition (basic and acidic residues); it reads TVKEEVVKEEAKPQV. The segment covering 129–139 has biased composition (polar residues); sequence TTQSQDNSGDQ. Over residues 179 to 193 the composition is skewed to basic and acidic residues; the sequence is DVVEAKEASDEKVET. Residues 194-512 form a fibrinogen/elastin/tropoelastin-binding region; the sequence is GTDVTSKVTV…SNKADGNGKN (319 aa). The interval 513-873 is fibronectin-binding; that stretch reads GQIIQNNDFE…EGQQTIEEDT (361 aa). A B-1 repeat occupies 546-575; that stretch reads ENQDNTPLDIDYHTAIDGEGGYVDGYIETI. Positions 546–605 are 2 X approximate tandem repeats; that stretch reads ENQDNTPLDIDYHTAIDGEGGYVDGYIETIEETDSSAIDIDYHTAVDSEAGHVGGYTESS. Residues 576 to 605 form a B-2 repeat; the sequence is EETDSSAIDIDYHTAVDSEAGHVGGYTESS. 4 disordered regions span residues 596 to 623, 741 to 815, 828 to 953, and 966 to 992; these read GHVG…NSKH, LGYE…IDFD, EIIE…GKVV, and VAPT…NKGM. Residues 746-783 form a D-1 repeat; sequence GQNSGNQSFEEDTEEDKPKYEQGGNIVDIDFDSVPQIQ. Positions 746-875 are 4 X approximate tandem repeats; the sequence is GQNSGNQSFE…QQTIEEDTTP (130 aa). Polar residues predominate over residues 780–791; the sequence is PQIQGQNNGNQS. One copy of the D-2 repeat lies at 784–821; sequence GQNNGNQSFEEDTEKDKPKYEQGGNIIDIDFDSVPQIH. Residues 822-860 form a D-3 repeat; the sequence is GFNKHTEIIEEDTNKDKPNYQFGGHNSVDFEEDTLPKVS. Basic and acidic residues predominate over residues 828 to 839; sequence EIIEEDTNKDKP. The D-4; truncated repeat unit spans residues 861 to 875; it reads GQNEGQQTIEEDTTP. The segment covering 875–935 has biased composition (pro residues); it reads PPTPPTPEVP…PAEPGKPVPP (61 aa). WR repeat units follow at residues 876–889, 890–903, 904–917, 918–931, and 932–945; these read PTPP…EPET, PTPP…EPGK, and PVPP…KPSK. The 5 X tandem repeats, Pro-rich (WR) stretch occupies residues 876-945; it reads PTPPTPEVPS…AKEEPKKPSK (70 aa). Residues 979–983 carry the LPXTG sorting signal motif; it reads LPETG. Residue threonine 982 is modified to Pentaglycyl murein peptidoglycan amidated threonine. The propeptide at 983-1015 is removed by sortase; it reads GGEESTNKGMLFGGLFSILGLALLRRNKKNNKA.

The protein localises to the secreted. It localises to the cell wall. Its function is as follows. Promotes bacterial attachment to multiple substrates, such as fibronectin (Fn), fibrinogen (Fg), elastin peptides and tropoelastin. This confers to S.aureus the ability to invade endothelial cells. Promotes adherence to and aggregation of activated platelets. In Staphylococcus aureus (strain MSSA476), this protein is Fibronectin-binding protein A (fnbA).